Consider the following 264-residue polypeptide: 14-3-3-like protein GF14-A (264 aa).

The disordered stretch occupies residues 245-264 (DMQDDGGDEMRDATKPEDEH). The segment covering 252 to 264 (DEMRDATKPEDEH) has biased composition (basic and acidic residues).

Belongs to the 14-3-3 family.

Functionally, is associated with a DNA binding complex that binds to the G box, a well-characterized cis-acting DNA regulatory element found in plant genes. This Oryza sativa subsp. japonica (Rice) protein is 14-3-3-like protein GF14-A (GF14A).